A 513-amino-acid chain; its full sequence is Carotenoid isomerooxygenase (513 aa).

Residues H184, H242, H312, and H503 each contribute to the Fe cation site.

It belongs to the carotenoid oxygenase family. Fe(2+) is required as a cofactor.

It carries out the reaction all-trans-zeaxanthin + O2 = (3R)-11-cis-3-hydroxyretinal + (3R)-all-trans-3-hydroxyretinal. It participates in cofactor metabolism; retinol metabolism. Functionally, catalyzes the oxidative cleavage at the 15,15'-double bond of carotenoids and the simultaneous all-trans to 11-cis isomerization of one cleavage product. Carotenoids like 11-cis retinal can promote visual pigment biogenesis in the dark. Essential for the biosynthesis of the 3-hydroxyretinal chromophore of rhodopsin from zeaxanthin and for proper photoreceptor development. The chain is Carotenoid isomerooxygenase (ninaB) from Galleria mellonella (Greater wax moth).